Consider the following 320-residue polypeptide: GMP reductase (320 aa).

Residue Cys174 is the Thioimidate intermediate of the active site. Position 203–226 (203–226) interacts with NADP(+); the sequence is IIADGGLRVHGDIAKSIRMGASFC.

It belongs to the IMPDH/GMPR family. GuaC type 2 subfamily.

It catalyses the reaction IMP + NH4(+) + NADP(+) = GMP + NADPH + 2 H(+). Catalyzes the irreversible NADPH-dependent deamination of GMP to IMP. It functions in the conversion of nucleobase, nucleoside and nucleotide derivatives of G to A nucleotides, and in maintaining the intracellular balance of A and G nucleotides. The polypeptide is GMP reductase (Mycoplasma mycoides subsp. mycoides SC (strain CCUG 32753 / NCTC 10114 / PG1)).